The following is a 530-amino-acid chain: MQKQQLWERYKNLLYHDAELELSVDTSRIDFPEGFLEKMDPRLQQAYQEMEALEQGAVANPDEHRMVGHYWLRAPELAPEATLAEEITSTLAAIEAFASSVHGGNIAAPDGHRFTDLLIIGIGGSALGPQFLADSLGGPKDLLRIWFFDNTDPDGMDKVLSGIGAALKQTLVVVISKSGGTKETRNGMLEACQAFERAGLHFAGHAVAVTGSGSELDRTASRENWLGVFPMWDWVGGRTSVTSAVGLLPAALQGIDVDRLLAGARACDQKTRSRVTRENPAALLALSWFHATQGKGTRDMVLLPYKDRLLLFSRYLQQLIMESLGKGLDRDGKEVLQGIAVYGNKGSTDQHAYVQQLREGVHNFFVTFIEVLKDRQGPSMEVEPGATSGDYLSGFFQGTRSALYEKGRESVTITVRELSPASIGALIALYERAVGLYASLVNVNAYHQPGVEAGKEAAGAVLKLQGEIMELLRRQPNRDFTGEEMALALARPEEVETTFMILRHLAANGDHGVSVTEKDKIWENKYRSKD.

The active-site Proton donor is Glu-322. Catalysis depends on residues His-351 and Lys-455.

It belongs to the GPI family.

The protein localises to the cytoplasm. The enzyme catalyses alpha-D-glucose 6-phosphate = beta-D-fructose 6-phosphate. It functions in the pathway carbohydrate biosynthesis; gluconeogenesis. It participates in carbohydrate degradation; glycolysis; D-glyceraldehyde 3-phosphate and glycerone phosphate from D-glucose: step 2/4. Its function is as follows. Catalyzes the reversible isomerization of glucose-6-phosphate to fructose-6-phosphate. The sequence is that of Glucose-6-phosphate isomerase from Citrifermentans bemidjiense (strain ATCC BAA-1014 / DSM 16622 / JCM 12645 / Bem) (Geobacter bemidjiensis).